Consider the following 405-residue polypeptide: L-rhamnonate dehydratase (405 aa).

The substrate site is built by histidine 33 and arginine 59. Aspartate 226, glutamate 252, and glutamate 280 together coordinate Mg(2+). Histidine 329 (proton acceptor) is an active-site residue. Glutamate 349 serves as a coordination point for substrate.

Belongs to the mandelate racemase/muconate lactonizing enzyme family. RhamD subfamily. In terms of assembly, homooctamer; tetramer of dimers. Mg(2+) is required as a cofactor.

It catalyses the reaction L-rhamnonate = 2-dehydro-3-deoxy-L-rhamnonate + H2O. Catalyzes the dehydration of L-rhamnonate to 2-keto-3-deoxy-L-rhamnonate (KDR). The sequence is that of L-rhamnonate dehydratase from Escherichia coli O81 (strain ED1a).